Consider the following 219-residue polypeptide: Probable GTP-binding protein EngB (219 aa).

Residues Val-31–Pro-205 form the EngB-type G domain. GTP-binding positions include Gly-39–Ser-46, Gly-66–Leu-70, Asp-84–Gly-87, Thr-151–Asp-154, and Phe-184–Ala-186. Residues Ser-46 and Thr-68 each coordinate Mg(2+).

The protein belongs to the TRAFAC class TrmE-Era-EngA-EngB-Septin-like GTPase superfamily. EngB GTPase family. Mg(2+) serves as cofactor.

Its function is as follows. Necessary for normal cell division and for the maintenance of normal septation. In Shewanella sp. (strain ANA-3), this protein is Probable GTP-binding protein EngB.